The following is a 290-amino-acid chain: Concanavalin-A (290 aa).

Residues 1 to 29 (MAISKKSSLFLPIFTFITMFLMVVNKVSS) form the signal peptide. Residues Asp-119 and Arg-139 each coordinate a carbohydrate. Residue Asp-119 coordinates Ca(2+). Positions 149–163 (VIRNSTTIDFNAAYN) are excised as a propeptide. N-linked (GlcNAc...) asparagine glycosylation occurs at Asn-152. 2 residues coordinate Mn(2+): Glu-171 and Asp-173. Residues Asp-173, Tyr-175, Asn-177, and Asp-182 each coordinate Ca(2+). Mn(2+)-binding residues include Asp-182 and His-187. 262 to 263 (LY) provides a ligand contact to a carbohydrate. Positions 282-290 (EIPDIATVV) are excised as a propeptide.

It belongs to the leguminous lectin family. As to quaternary structure, homotetramer. The mature chain consists of residues 164-281 followed by 30-148. To form a mature chain the precursor undergoes further post-translational modification after removal of the signal sequence; cleavage after Asn at positions Asn-148, Asn-163, and Asn-281 is followed by transposition and ligation (By formation of a new peptide bond) of residues 164-281 and 30-148.

Its function is as follows. Glucose/D-mannose/rhamnose specific lectin. Has hemagglutinating activity towards rabbit erythrocytes. Has mitogenic activity towards murine splenocytes that is inhibited by glucose. Inhibits HIV-1 reverse transcriptase with an IC(50) of 35 uM. Has a potent antiproliferative activity against L1210 leukemia cells in vitro that is not inhibited by glucose. Inhibits translation in cell-free rabbit reticulocyte system with an IC(50) of 2.08 uM. Lacks anti-fungal activity against M.arachidicola, B.cenera and F.oxysporum. This Canavalia gladiata (Sword bean) protein is Concanavalin-A.